The chain runs to 426 residues: Serine--tRNA ligase (426 aa).

233 to 235 (TAE) contributes to the L-serine binding site. An ATP-binding site is contributed by 264 to 266 (RSE). Residue Glu287 participates in L-serine binding. 351 to 354 (EISS) is an ATP binding site. Residue Ser387 participates in L-serine binding.

Belongs to the class-II aminoacyl-tRNA synthetase family. Type-1 seryl-tRNA synthetase subfamily. As to quaternary structure, homodimer. The tRNA molecule binds across the dimer.

The protein resides in the cytoplasm. It catalyses the reaction tRNA(Ser) + L-serine + ATP = L-seryl-tRNA(Ser) + AMP + diphosphate + H(+). It carries out the reaction tRNA(Sec) + L-serine + ATP = L-seryl-tRNA(Sec) + AMP + diphosphate + H(+). Its pathway is aminoacyl-tRNA biosynthesis; selenocysteinyl-tRNA(Sec) biosynthesis; L-seryl-tRNA(Sec) from L-serine and tRNA(Sec): step 1/1. Functionally, catalyzes the attachment of serine to tRNA(Ser). Is also able to aminoacylate tRNA(Sec) with serine, to form the misacylated tRNA L-seryl-tRNA(Sec), which will be further converted into selenocysteinyl-tRNA(Sec). This is Serine--tRNA ligase from Pseudomonas putida (strain ATCC 700007 / DSM 6899 / JCM 31910 / BCRC 17059 / LMG 24140 / F1).